A 315-amino-acid polypeptide reads, in one-letter code: Porphobilinogen deaminase (315 aa).

Cys241 is subject to S-(dipyrrolylmethanemethyl)cysteine.

It belongs to the HMBS family. Monomer. Dipyrromethane serves as cofactor.

The catalysed reaction is 4 porphobilinogen + H2O = hydroxymethylbilane + 4 NH4(+). It participates in porphyrin-containing compound metabolism; protoporphyrin-IX biosynthesis; coproporphyrinogen-III from 5-aminolevulinate: step 2/4. Its function is as follows. Tetrapolymerization of the monopyrrole PBG into the hydroxymethylbilane pre-uroporphyrinogen in several discrete steps. The chain is Porphobilinogen deaminase from Nitratidesulfovibrio vulgaris (strain ATCC 29579 / DSM 644 / CCUG 34227 / NCIMB 8303 / VKM B-1760 / Hildenborough) (Desulfovibrio vulgaris).